The chain runs to 172 residues: Translation initiation factor IF-3 (172 aa).

It belongs to the IF-3 family. In terms of assembly, monomer.

The protein resides in the cytoplasm. IF-3 binds to the 30S ribosomal subunit and shifts the equilibrium between 70S ribosomes and their 50S and 30S subunits in favor of the free subunits, thus enhancing the availability of 30S subunits on which protein synthesis initiation begins. The polypeptide is Translation initiation factor IF-3 (Campylobacter concisus (strain 13826)).